The chain runs to 1030 residues: MEEQVANAIEIAGNPTSDQTLKAQAFDYLNQLRTDPSGWQVCLTLFTKTPQYSEIIRHVALEVVNSAAQAGLIDPQALGYVRDGLMAYLRQVYGQDNVTPDSTSIQNKIAQTITFLFSALYGNGWETFFDDLLSLTYKSSASTSHDNPLGIVFYLRVINAIHEEIGDVLVSRSRTEQDKANLLKDLIRSRDMQKIASSWQQILSEWRDGNDTIVEMSLRAVGSWVSWIDIGLVVNQTTLDLLFQQLGRAQKAELREGEEKVRDAAVDVFTEIIGKKMKPEDKMDMIIFLNLDTIVTQLSNSPPLHENRFTFKYDTDLAETVAKLVNITVIDIVRALEQDTVTADCKAKATGLLQAFLPHILRYFSDEYDEVCSTVIPCVSDLLSYLRKIAKVNPALAEQHSSILLPILKAIIAKMRYDETSSWGDEDDQTDEAEFQELRKRLGVLQQIVASVNEQLCMEAVSEVVGNTFESLRQSGAQLDWRDLDLALHEMFLFGEVAVRAGSLYSKGVPNNAAAERLVEMMLKMVESDIRSFTHPATQLQYMEICVRYSSFFQYHTHLIPTVLESFLQLVHHPIKKVKTRSWYLFQRLVKQLRTHVGNVAQTVVEALGDLLVINAELPTEGSDGDEMSSEDHEGSADAVFNSQLYLFEAVGIICSTPTVPADKQVLYAQSVLNPVFMDMEKNLAPAKANDERALLQIHHDIMALGTLARGFSDWMPGTSSPASLPAPEVSEAFMQVSEATLVALESLKTSFNVRTAARFAFSRLIGVLGSRILPQLPRWIDGLLTQTSSRDEMALFLRLLDQVIFGFKSEIYSILDALLTPFLQRVFSGIADAPTGTDDEVQLAELKREYLNFLLAVLNNELGAVIISERNQPMFETVIGTIEHFAKDIEDFTTAKMAFSVLSKMGSSWGGPDITPEGANGAAPQQQALPGFGQFMITRLSPLCWALPATPSFNSKDAQAKQVLAEAGGLQRTIYAKTGMEYLQYLRDRELPGMGMGADLVEEFVGALGRLDMKGFRQFFPSFIQRLSA.

Belongs to the exportin family.

The protein resides in the nucleus. Its subcellular location is the cytoplasm. In terms of biological role, tRNA nucleus export receptor which facilitates tRNA translocation across the nuclear pore complex. Involved in pre-tRNA splicing, probably by affecting the interaction of pre-tRNA with splicing endonuclease. The chain is Exportin-T (los1) from Aspergillus niger (strain ATCC MYA-4892 / CBS 513.88 / FGSC A1513).